The sequence spans 100 residues: Small ribosomal subunit protein uS14c (100 aa).

This sequence belongs to the universal ribosomal protein uS14 family. Part of the 30S ribosomal subunit.

It is found in the plastid. Its subcellular location is the chloroplast. In terms of biological role, binds 16S rRNA, required for the assembly of 30S particles. The protein is Small ribosomal subunit protein uS14c of Olimarabidopsis pumila (Dwarf rocket).